We begin with the raw amino-acid sequence, 862 residues long: Protein PRQFV-amide (862 aa).

The signal sequence occupies residues 1–20 (MSSQLLICSVFVLFTFGPNS). The propeptide occupies 21 to 79 (FPSCLAQEQAGNSDATQLSADAKAPESAKDKSGDVQNDGTKSVRSKRDLEIDFGSGDVQ). Residues 32–68 (NSDATQLSADAKAPESAKDKSGDVQNDGTKSVRSKRD) form a disordered region. Residues 43–53 (KAPESAKDKSG) show a composition bias toward basic and acidic residues. Valine amide is present on V86. A propeptide spanning residues 90-149 (AAPPVFQTPLVQDKISGFIPSETESPVIGEFAFPGSVFMDDEEALGAEEEPMDDEDLEFY) is cleaved from the precursor. V156 carries the post-translational modification Valine amide. Residues 160–175 (GIDDYLLQEKLKDFIE) constitute a propeptide that is removed on maturation. Valine amide occurs at positions 182, 190, 198, 206, 214, 222, 230, 238, and 246. Positions 250–259 (EADPSFLFED) are excised as a propeptide. V266 bears the Valine amide mark. Positions 270-300 (SLDFLGGANWYNPYDVTMEPQSEGSDLQGFS) are excised as a propeptide. V307 is modified (valine amide). Positions 311–319 (DAFDMFEFS) are excised as a propeptide. V326 is subject to Valine amide. A propeptide spanning residues 330–338 (DQDEMFDFS) is cleaved from the precursor. V345 is subject to Valine amide. Positions 349–357 (DLQEFFDLS) are excised as a propeptide. V364 carries the valine amide modification. Positions 368–376 (EFDDEIDFS) are excised as a propeptide. Position 383 is a valine amide (V383). The propeptide occupies 387-395 (ENDDDFDLS). The residue at position 402 (V402) is a Valine amide. Residues 406–414 (ENDDEFDLS) constitute a propeptide that is removed on maturation. A Valine amide modification is found at V421. A compositionally biased stretch (basic and acidic residues) spans 424–434 (RENDDELEFSK). Positions 424 to 528 (RENDDELEFS…NNDDLDFSKR (105 aa)) are disordered. A propeptide spanning residues 425-433 (ENDDELEFS) is cleaved from the precursor. Position 440 is a valine amide (V440). Residues 441-452 (GKREDDEIDFSK) are compositionally biased toward basic and acidic residues. Positions 444–451 (EDDEIDFS) are excised as a propeptide. V458 carries the post-translational modification Valine amide. Positions 459–471 (GKRENDGEIDFSK) are enriched in basic and acidic residues. Positions 462–470 (ENDGEIDFS) are excised as a propeptide. Valine amide is present on V477. Residues 478-490 (GKRENDDEIDFSK) show a composition bias toward basic and acidic residues. Residues 481–489 (ENDDEIDFS) constitute a propeptide that is removed on maturation. A Valine amide modification is found at V496. Residues 497-508 (GKREDGEIDFSK) show a composition bias toward basic and acidic residues. Positions 500–507 (EDGEIDFS) are excised as a propeptide. V514 carries the post-translational modification Valine amide. Over residues 515 to 527 (GKRENNDDLDFSK) the composition is skewed to basic and acidic residues. The propeptide occupies 518 to 526 (ENNDDLDFS). V533 carries the post-translational modification Valine amide. Residues 537-545 (EVDDEIDFS) constitute a propeptide that is removed on maturation. Residues 549–634 (RQFVGKREND…RQFVGKREND (86 aa)) are disordered. V552 is modified (valine amide). Residues 553 to 565 (GKRENDDDLDFSK) show a composition bias toward basic and acidic residues. A propeptide spanning residues 556–564 (ENDDDLDFS) is cleaved from the precursor. At V571 the chain carries Valine amide. A compositionally biased stretch (basic and acidic residues) spans 572–584 (GKRENDDDLEFSK). A propeptide spanning residues 575–583 (ENDDDLEFS) is cleaved from the precursor. Position 590 is a valine amide (V590). A propeptide spanning residues 594–602 (ENDPLLDFS) is cleaved from the precursor. At V609 the chain carries Valine amide. Positions 610 to 622 (GKRENDDDLDFSK) are enriched in basic and acidic residues. Positions 613 to 621 (ENDDDLDFS) are excised as a propeptide. V628 bears the Valine amide mark. Positions 632–640 (ENDPLIDFS) are excised as a propeptide. A Valine amide modification is found at V647. The propeptide occupies 651-659 (ESDGDFELS). V666 carries the post-translational modification Valine amide. The propeptide occupies 670 to 677 (DVDGPGLS). A Valine amide modification is found at V684. A propeptide spanning residues 688–695 (EDYDIDFA) is cleaved from the precursor. Residue V702 is modified to Valine amide. Positions 706–714 (GNEDEFEMS) are excised as a propeptide. V721 bears the Valine amide mark. Positions 724–757 (RNFEELDQDFLRHMHDILDKRIPQFVSLPSLTAA) are excised as a propeptide. V764 carries the post-translational modification Valine amide. A propeptide spanning residues 768 to 812 (SDAAFLETLRHLRDYVGGQDEQNVSEFSYQHPYPSDLNDVGLIQQ) is cleaved from the precursor. The residue at position 819 (V819) is a Valine amide. Positions 823–862 (GGDVDDINTTYRLGDFVSQPMSFVEEPSWLCRQLNAFGIS) are excised as a propeptide.

As to expression, expressed abundantly in the abdominal ganglion, much less in the pedal and cerebral ganglia, and rarely in the buccal and pleural ganglia.

The protein localises to the secreted. PRQFV-amide may act as a modulator within the feeding system as well as in other systems of Aplysia. The polypeptide is Protein PRQFV-amide (Aplysia californica (California sea hare)).